The sequence spans 150 residues: CCAAT/enhancer-binding protein gamma (150 aa).

Lys3 participates in a covalent cross-link: Glycyl lysine isopeptide (Lys-Gly) (interchain with G-Cter in SUMO2). The segment at 27-94 (GLQQVPQLVP…QKAQDTLQRV (68 aa)) is disordered. A compositionally biased stretch (low complexity) spans 28-37 (LQQVPQLVPA). The span at 56–72 (SPMDRNSDEYRQRRERN) shows a compositional bias: basic and acidic residues. One can recognise a bZIP domain in the interval 62–125 (SDEYRQRRER…SVLKDLFLEH (64 aa)). A basic motif region spans residues 66–93 (RQRRERNNMAVKKSRLKSKQKAQDTLQR). The segment at 97–118 (LKEENERLEAKIKLLTKELSVL) is leucine-zipper. Positions 129–150 (LADNVQPISTETTATNSDNPGQ) are disordered. A compositionally biased stretch (polar residues) spans 134 to 150 (QPISTETTATNSDNPGQ).

Belongs to the bZIP family. C/EBP subfamily. Binds DNA as a dimer and can form stable heterodimers with CEBPA. Can form stable heterodimers with CEBPB. Interacts with ZNF638; this interaction increases transcriptional activation. Ubiquitous.

The protein localises to the nucleus. In terms of biological role, transcription factor that binds to the promoter and the enhancer regions of target genes. Binds to the promoter and the enhancer of the immunoglobulin heavy chain. Binds to GPE1, a cis-acting element in the G-CSF gene promoter. Binds to the enhancer element PRE-I (positive regulatory element-I) of the IL-4 gene. Binds to the promoter and the enhancer of the alpha-1-fetoprotein gene. The polypeptide is CCAAT/enhancer-binding protein gamma (Cebpg) (Mus musculus (Mouse)).